The chain runs to 1242 residues: Protein jagged-1a (1242 aa).

Positions 1–28 (MILRPSATFAALSAHVLLRCLWMRVCEA) are cleaved as a signal peptide. The Extracellular portion of the chain corresponds to 29–1070 (SGHFEMQVLS…KQPQNPNVDY (1042 aa)). Residue Asn141 is glycosylated (N-linked (GlcNAc...) asparagine). Positions 186-230 (VTCDEHYFGFGCNKFCRPRDDFFGHYTCDHNGNKTCLEGWAGPEC) constitute a DSL domain. 2 cysteine pairs are disulfide-bonded: Cys188/Cys197 and Cys201/Cys213. Asn218 is a glycosylation site (N-linked (GlcNAc...) asparagine). 39 disulfides stabilise this stretch: Cys221–Cys230, Cys235–Cys246, Cys239–Cys252, Cys254–Cys263, Cys266–Cys277, Cys272–Cys283, Cys285–Cys294, Cys301–Cys313, Cys307–Cys323, Cys325–Cys334, Cys341–Cys352, Cys346–Cys361, Cys363–Cys372, Cys379–Cys390, Cys384–Cys399, Cys401–Cys410, Cys417–Cys428, Cys422–Cys437, Cys439–Cys448, Cys455–Cys465, Cys459–Cys474, Cys476–Cys485, Cys492–Cys503, Cys497–Cys512, Cys514–Cys523, Cys530–Cys541, Cys535–Cys550, Cys552–Cys561, Cys600–Cys618, Cys620–Cys629, Cys636–Cys647, Cys641–Cys656, Cys658–Cys667, Cys674–Cys685, Cys679–Cys694, Cys696–Cys705, Cys712–Cys723, Cys717–Cys732, and Cys734–Cys743. The region spanning 231-264 (NTAICKQGCSIEHGSCKVPGNCRCLYGWQGEYCD) is the EGF-like 1 domain. The EGF-like 2; atypical domain occupies 265 to 295 (QCIPHPGCVHGTCIEPWQCLCDTNWGGQLCD). EGF-like domains follow at residues 297 to 335 (DLNT…QNCE) and 337 to 373 (ADNA…PSCN). Residues 375 to 411 (NEDDCSPNPCNHSGVCVDLVDGFKCICPVQWTGKTCL) form the EGF-like 5; calcium-binding domain. An N-linked (GlcNAc...) asparagine glycan is attached at Asn385. Residues 413–449 (DANECEESPCVNAHSCRNLIGGYFCECLPGWTGQNCD) enclose the EGF-like 6; calcium-binding domain. Positions 451 to 486 (NVNDCHGQCLNGGLCKDLVNGYRCVCAAGFAGDRCE) constitute an EGF-like 7; calcium-binding domain. The EGF-like 8; calcium-binding domain maps to 488 to 524 (DVDECASRPCLNGGRCQDTLNGFQCLCPPGFSGATCQ). 2 consecutive EGF-like domains span residues 526–562 (DLDY…KNCS) and 575–630 (VIDS…TYCH). The N-linked (GlcNAc...) asparagine glycan is linked to Asn560. The EGF-like 11; calcium-binding domain occupies 632 to 668 (NINDCESSPCLSGGTCIDKINAYQCICADGWEGPNCE). Residues 670 to 706 (NIDDCRTNPCRDRGVCRDLVNDFYCECENGWKGKTCH) form the EGF-like 12; calcium-binding domain. EGF-like domains are found at residues 708–744 (RESQ…ATCN) and 747–783 (KNSS…PTCS). Residue Asn748 is glycosylated (N-linked (GlcNAc...) asparagine). Disulfide bonds link Cys751/Cys762, Cys756/Cys771, Cys773/Cys782, Cys789/Cys800, Cys794/Cys809, Cys811/Cys820, Cys827/Cys838, Cys832/Cys847, and Cys849/Cys858. The region spanning 785–821 (NSNDCNPQPCYNSGTCVDGDNWYRCECASGFAGPDCR) is the EGF-like 15; calcium-binding domain. The region spanning 823-859 (NINECQSSPCAFGSTCVDEINGYRCLCPPGRTGPRCQ) is the EGF-like 16; calcium-binding domain. An EGF-like 17 domain is found at 917-959 (TGQLCVPVRDEQCFVKPCSSQGECWSAHRPAVRTHCQPDSHCA). N-linked (GlcNAc...) asparagine glycosylation is found at Asn960, Asn991, and Asn1046. Residues 1071 to 1095 (MVPLLVSVVTAIWVLALASVFLWCI) traverse the membrane as a helical segment. The Cytoplasmic portion of the chain corresponds to 1096-1242 (RHHRKQSSSA…HSLQKMEYIV (147 aa)). The tract at residues 1191–1242 (RDDRLSSNGTDIKKHPQWTNKRDNRDLESQHRVPDSQHRDSQHSLQKMEYIV) is disordered. A compositionally biased stretch (basic and acidic residues) spans 1210–1232 (NKRDNRDLESQHRVPDSQHRDSQ).

The protein localises to the membrane. It is found in the cell membrane. In terms of biological role, ligand for multiple Notch receptors and involved in the mediation of Notch signaling. Seems to be involved in cell-fate decisions. In Danio rerio (Zebrafish), this protein is Protein jagged-1a (jag1a).